Here is a 556-residue protein sequence, read N- to C-terminus: Arginine--tRNA ligase (556 aa).

Positions 130 to 140 (ANPTGPIHLGG) match the 'HIGH' region motif.

This sequence belongs to the class-I aminoacyl-tRNA synthetase family. Monomer.

It is found in the cytoplasm. The catalysed reaction is tRNA(Arg) + L-arginine + ATP = L-arginyl-tRNA(Arg) + AMP + diphosphate. This Corynebacterium jeikeium (strain K411) protein is Arginine--tRNA ligase.